The following is a 174-amino-acid chain: MLDREGYRPNVGIILINERNEVFWGKRVREHSWQFPQGGIKPGESPETAMYRELYEEVGLLPQHVKIVGRTRDWLRYDVPNNWVRREWRGSYRGQKQIWYLLRLTGRDCDVNLRATRHPEFDGWRWHQYWAPVDEVIDFKRDVYLEALKELSSRFLRGMESYEDFAARQPSGNR.

The Nudix hydrolase domain maps to 6–149 (GYRPNVGIIL…KRDVYLEALK (144 aa)). Residues 38–59 (GGIKPGESPETAMYRELYEEVG) carry the Nudix box motif.

The protein belongs to the Nudix hydrolase family. RppH subfamily. A divalent metal cation is required as a cofactor.

Functionally, accelerates the degradation of transcripts by removing pyrophosphate from the 5'-end of triphosphorylated RNA, leading to a more labile monophosphorylated state that can stimulate subsequent ribonuclease cleavage. The chain is RNA pyrophosphohydrolase from Neisseria gonorrhoeae (strain ATCC 700825 / FA 1090).